Consider the following 494-residue polypeptide: MFPSISNISLSPSSLFTAYASLTGFLMLFRSLFNDEVPERLRSYITDLLNRFFTPKSKNLTMVIDEIIGFKRNQVFDAAEVYLRNKIGPETARLRVGKLPKQKHFTIYIEKGEEILDTFENSELRWTYVESENEASQKEKRYYELTFEKKLRDKVMNSYLSHVVAESEETKRDLRAVKLYSRDVRASKDDDGMAGAGWGCINLEHPSTFETLAMDPGAKKKIIDDMERFLKRREFYKRVGKAWKRGYLLYGPPGTGKSSLIAAMANYLKFDVFDLELSSIYENAQLKSILLSTTNRSILVIEDIDCSSAEVVDREADEYQEYEEGYYGRVTLSGLLNFVDGLWSSFGDERIIVFTTNHKERLDPALLRPGRMDMHINMSYCTGLGFRTLVSNYLGLGGLNHPLCEEIEALIDSTEVTPAELAEELMQEDDTDVVLRGVVSFVENRKVEISKTKELEGSTCRKLDGDDKHNVSSTNDLKKTKKKKKGGKGKAKGN.

Residues serine 13–phenylalanine 29 traverse the membrane as a helical segment. Glycine 251–serine 258 provides a ligand contact to ATP. Over residues threonine 459–asparagine 470 the composition is skewed to basic and acidic residues. The disordered stretch occupies residues threonine 459–asparagine 494. Over residues lysine 479–asparagine 494 the composition is skewed to basic residues.

Belongs to the AAA ATPase family. BCS1 subfamily. Mg(2+) serves as cofactor.

Its subcellular location is the membrane. It catalyses the reaction ATP + H2O = ADP + phosphate + H(+). The protein is AAA-ATPase At2g18190 of Arabidopsis thaliana (Mouse-ear cress).